We begin with the raw amino-acid sequence, 985 residues long: Protein psiQ (985 aa).

The signal sequence occupies residues 1–20 (MMKYIYILLIFSLLFLKINS). In terms of domain architecture, PA14 spans 102–247 (QSTTNPNVYA…YDECGVCQGD (146 aa)). Residues asparagine 127, asparagine 309, asparagine 424, asparagine 491, asparagine 517, asparagine 527, asparagine 592, asparagine 620, asparagine 649, asparagine 696, asparagine 735, asparagine 767, asparagine 786, asparagine 824, and asparagine 842 are each glycosylated (N-linked (GlcNAc...) asparagine).

This sequence belongs to the prespore-cell-inducing factor family.

The protein resides in the secreted. The protein is Protein psiQ (psiQ) of Dictyostelium discoideum (Social amoeba).